The sequence spans 307 residues: Bifunctional protein FolD (307 aa).

Residues 170–172 (GRS), Ser-195, and Ile-236 each bind NADP(+).

Belongs to the tetrahydrofolate dehydrogenase/cyclohydrolase family. As to quaternary structure, homodimer.

It carries out the reaction (6R)-5,10-methylene-5,6,7,8-tetrahydrofolate + NADP(+) = (6R)-5,10-methenyltetrahydrofolate + NADPH. The enzyme catalyses (6R)-5,10-methenyltetrahydrofolate + H2O = (6R)-10-formyltetrahydrofolate + H(+). Its pathway is one-carbon metabolism; tetrahydrofolate interconversion. Functionally, catalyzes the oxidation of 5,10-methylenetetrahydrofolate to 5,10-methenyltetrahydrofolate and then the hydrolysis of 5,10-methenyltetrahydrofolate to 10-formyltetrahydrofolate. The protein is Bifunctional protein FolD of Sinorhizobium fredii (strain NBRC 101917 / NGR234).